A 377-amino-acid polypeptide reads, in one-letter code: Protein-arginine rhamnosyltransferase (377 aa).

A dTDP-beta-L-rhamnose-binding site is contributed by Tyr15. The active-site Proton acceptor is the Asp17. Residues Tyr193, Gln255, and 271–275 each bind dTDP-beta-L-rhamnose; that span reads RGEDS. The active site involves Glu273.

The protein belongs to the glycosyltransferase 104 family.

It carries out the reaction dTDP-beta-L-rhamnose + L-arginyl-[protein] = N(omega)-(alpha-L-rhamnosyl)-L-arginyl-[protein] + dTDP + H(+). Functionally, protein-arginine rhamnosyltransferase that catalyzes the transfer of a single rhamnose to elongation factor P (EF-P) on 'Lys-32', a modification required for EF-P-dependent rescue of polyproline stalled ribosomes. The protein is Protein-arginine rhamnosyltransferase of Pseudomonas putida (strain ATCC 47054 / DSM 6125 / CFBP 8728 / NCIMB 11950 / KT2440).